The following is a 274-amino-acid chain: Large ribosomal subunit protein uL2c (274 aa).

The interval 224–274 (NPVDHPHGGGEGRAPIGRKKPTTPWGYPALGRKSRKRNKYSEKFILRHRSK) is disordered.

The protein belongs to the universal ribosomal protein uL2 family. In terms of assembly, part of the 50S ribosomal subunit.

It is found in the plastid. The protein localises to the chloroplast. The chain is Large ribosomal subunit protein uL2c (rpl2) from Ipomoea purpurea (Common morning glory).